We begin with the raw amino-acid sequence, 412 residues long: CCA-adding enzyme (412 aa).

ATP contacts are provided by Ser-41 and Lys-44. Residues Ser-41 and Lys-44 each contribute to the CTP site. Asp-53, Asp-55, and Asp-106 together coordinate Mg(2+). ATP is bound by residues His-129, Lys-149, and Tyr-158. Residues His-129, Lys-149, and Tyr-158 each contribute to the CTP site.

This sequence belongs to the tRNA nucleotidyltransferase/poly(A) polymerase family. Archaeal CCA-adding enzyme subfamily. As to quaternary structure, homodimer. Mg(2+) serves as cofactor.

It catalyses the reaction a tRNA precursor + 2 CTP + ATP = a tRNA with a 3' CCA end + 3 diphosphate. It carries out the reaction a tRNA with a 3' CCA end + 2 CTP + ATP = a tRNA with a 3' CCACCA end + 3 diphosphate. Its function is as follows. Catalyzes the addition and repair of the essential 3'-terminal CCA sequence in tRNAs without using a nucleic acid template. Adds these three nucleotides in the order of C, C, and A to the tRNA nucleotide-73, using CTP and ATP as substrates and producing inorganic pyrophosphate. tRNA 3'-terminal CCA addition is required both for tRNA processing and repair. Also involved in tRNA surveillance by mediating tandem CCA addition to generate a CCACCA at the 3' terminus of unstable tRNAs. While stable tRNAs receive only 3'-terminal CCA, unstable tRNAs are marked with CCACCA and rapidly degraded. The polypeptide is CCA-adding enzyme (Saccharolobus islandicus (strain M.16.27) (Sulfolobus islandicus)).